A 335-amino-acid chain; its full sequence is Nucleoid-associated protein Pput_1012 (335 aa).

This sequence belongs to the YejK family.

The protein resides in the cytoplasm. It is found in the nucleoid. This chain is Nucleoid-associated protein Pput_1012, found in Pseudomonas putida (strain ATCC 700007 / DSM 6899 / JCM 31910 / BCRC 17059 / LMG 24140 / F1).